We begin with the raw amino-acid sequence, 242 residues long: tRNA (guanine-N(1)-)-methyltransferase (242 aa).

S-adenosyl-L-methionine contacts are provided by residues G111 and I130 to L135.

Belongs to the RNA methyltransferase TrmD family. In terms of assembly, homodimer.

It localises to the cytoplasm. It catalyses the reaction guanosine(37) in tRNA + S-adenosyl-L-methionine = N(1)-methylguanosine(37) in tRNA + S-adenosyl-L-homocysteine + H(+). In terms of biological role, specifically methylates guanosine-37 in various tRNAs. This chain is tRNA (guanine-N(1)-)-methyltransferase, found in Aster yellows witches'-broom phytoplasma (strain AYWB).